The chain runs to 839 residues: Autophagy-related protein 9A (839 aa).

Ala-2 bears the N-acetylalanine mark. At 2–61 the chain is on the cytoplasmic side; sequence AQFDTEYQRLEASYSDSPPGEEDLLVHVAEGSKSPWHHIENLDLFFSRVYNLHQKNGFTC. The short motif at 8–11 is the Tyrosine-based sorting signal element; the sequence is YQRL. Ser-14, Ser-16, and Ser-18 each carry phosphoserine. Residues 62-84 traverse the membrane as a helical segment; sequence MLIGEMFELMQFLFVVAFTTFLV. Residues 85-128 are Lumenal-facing; it reads SCVDYDILFANKMVNHSLHPTEPVKVTLPDAFLPAQVCSARIQE. The N-linked (GlcNAc...) asparagine glycan is linked to Asn-99. A helical transmembrane segment spans residues 129-154; it reads NGSLITILVIAGVFWIHRLIKFIYNI. The Cytoplasmic portion of the chain corresponds to 155-290; the sequence is CCYWEIHSFY…ELAQRLSNRI (136 aa). The stretch at 291–301 is an intramembrane region; it reads LWIGIANFLLC. The Cytoplasmic segment spans residues 302 to 319; that stretch reads PLILIWQILYAFFSYAEV. An intramembrane segment occupies 320 to 328; that stretch reads LKREPGALG. Residues 329–371 lie on the Cytoplasmic side of the membrane; that stretch reads ARCWSLYGRCYLRHFNELEHELQSRLNRGYKPASKYMNCFLSP. Residues 372-397 traverse the membrane as a helical segment; the sequence is LLTLLAKNGAFFAGSILAVLIALTIY. Residues 398–406 lie on the Lumenal side of the membrane; sequence DEDVLAVEH. The helical transmembrane segment at 407–424 threads the bilayer; the sequence is VLTTVTLLGVTVTVCRSF. The Cytoplasmic portion of the chain corresponds to 425–470; it reads IPDQHMVFCPEQLLRVILAHIHYMPDHWQGNAHRSQTRDEFAQLFQ. The stretch at 471–480 is an intramembrane region; the sequence is YKAVFILEEL. Topologically, residues 481–483 are cytoplasmic; sequence LSP. Residues 484 to 492 lie within the membrane without spanning it; it reads IVTPLILIF. Topologically, residues 493-839 are cytoplasmic; sequence CLRPRALEII…DELPPQVHKV (347 aa). Residue Ser-656 is modified to Phosphoserine. Disordered stretches follow at residues 657 to 686 and 717 to 839; these read PLQP…SSGS and HKQQ…VHKV. The span at 724 to 736 shows a compositional bias: basic and acidic residues; the sequence is EPERHVWHRRESD. Phosphoserine is present on residues Ser-735, Ser-738, Ser-741, and Ser-828. Acidic residues-rich tracts occupy residues 737–747 and 823–832; these read ESGESAPEEGG and VPEEGSEDEL.

Belongs to the ATG9 family. In terms of assembly, homotrimer; forms a homotrimer with a central pore that forms a path between the two membrane leaflets. Interacts (via cytoplasmic its C-terminus) with ATG2A. Interacts with SUPT20H. Interacts (via the tyrosine-based sorting signal motif) with AP4M1; promoting association with the AP-4 complex. Interacts with ARFIP1 and ARFIP2. Interacts with ATG4A; the interaction is direct and promotes ATG9A trafficking. Ufmylated in a DDRGK1 dependent manner.

It localises to the preautophagosomal structure membrane. The protein localises to the cytoplasmic vesicle. It is found in the autophagosome membrane. The protein resides in the golgi apparatus. Its subcellular location is the trans-Golgi network membrane. It localises to the late endosome membrane. The protein localises to the recycling endosome membrane. It is found in the endoplasmic reticulum membrane. The protein resides in the mitochondrion membrane. The enzyme catalyses a 1,2-diacyl-sn-glycero-3-phosphocholine(in) = a 1,2-diacyl-sn-glycero-3-phosphocholine(out). The catalysed reaction is a 1,2-diacyl-sn-glycero-3-phospho-L-serine(in) = a 1,2-diacyl-sn-glycero-3-phospho-L-serine(out). It carries out the reaction a 1,2-diacyl-sn-glycero-3-phosphoethanolamine(in) = a 1,2-diacyl-sn-glycero-3-phosphoethanolamine(out). Functionally, phospholipid scramblase involved in autophagy by mediating autophagosomal membrane expansion. Cycles between the preautophagosomal structure/phagophore assembly site (PAS) and the cytoplasmic vesicle pool and supplies membrane for the growing autophagosome. Lipid scramblase activity plays a key role in preautophagosomal structure/phagophore assembly by distributing the phospholipids that arrive through ATG2 (ATG2A or ATG2B) from the cytoplasmic to the luminal leaflet of the bilayer, thereby driving autophagosomal membrane expansion. Also required to supply phosphatidylinositol 4-phosphate to the autophagosome initiation site by recruiting the phosphatidylinositol 4-kinase beta (PI4KB) in a process dependent on ARFIP2, but not ARFIP1. In addition to autophagy, also plays a role in necrotic cell death. This Mus musculus (Mouse) protein is Autophagy-related protein 9A.